The sequence spans 660 residues: Arginine--tRNA ligase, cytoplasmic (660 aa).

Met1 carries the post-translational modification N-acetylmethionine. The could be involved in the assembly of the multisynthetase complex stretch occupies residues 1 to 72; the sequence is MDVLVSECSA…QAERNKPTKN (72 aa). Residues 200–202, His211, Tyr384, Asp388, and Gln412 contribute to the L-arginine site; that span reads SPN. The short motif at 201-212 is the 'HIGH' region element; that stretch reads PNIAKEMHVGHL. Residues 529-543 are interaction with tRNA; sequence NTAAYLLYAFTRIRS.

Belongs to the class-I aminoacyl-tRNA synthetase family. In terms of assembly, interacts (via N-terminus) with AIMP1 (via N-terminus); this stimulates its catalytic activity. Interacts (via N-terminus) with LARS2 (via C-terminus). Monomer. Part of a multisubunit complex that groups tRNA ligases for Arg (RARS1), Asp (DARS1), Gln (QARS1), Ile (IARS1), Leu (LARS1), Lys (KARS1), Met (MARS1) the bifunctional ligase for Glu and Pro (EPRS1) and the auxiliary subunits AIMP1/p43, AIMP2/p38 and EEF1E1/p18. Interacts with QARS1. Part of a complex composed of RARS1, QARS1 and AIMP1.

The protein resides in the cytoplasm. The protein localises to the cytosol. It carries out the reaction tRNA(Arg) + L-arginine + ATP = L-arginyl-tRNA(Arg) + AMP + diphosphate. Its function is as follows. Forms part of a macromolecular complex that catalyzes the attachment of specific amino acids to cognate tRNAs during protein synthesis. Modulates the secretion of AIMP1 and may be involved in generation of the inflammatory cytokine EMAP2 from AIMP1. This is Arginine--tRNA ligase, cytoplasmic from Homo sapiens (Human).